Reading from the N-terminus, the 230-residue chain is 5'-methylthioadenosine/S-adenosylhomocysteine nucleosidase (230 aa).

The active-site Proton acceptor is the Glu-12. Substrate-binding positions include Gly-78, Met-153, and 174 to 175 (ME). Asp-198 acts as the Proton donor in catalysis.

It belongs to the PNP/UDP phosphorylase family. MtnN subfamily.

The enzyme catalyses S-adenosyl-L-homocysteine + H2O = S-(5-deoxy-D-ribos-5-yl)-L-homocysteine + adenine. It carries out the reaction S-methyl-5'-thioadenosine + H2O = 5-(methylsulfanyl)-D-ribose + adenine. The catalysed reaction is 5'-deoxyadenosine + H2O = 5-deoxy-D-ribose + adenine. Its pathway is amino-acid biosynthesis; L-methionine biosynthesis via salvage pathway; S-methyl-5-thio-alpha-D-ribose 1-phosphate from S-methyl-5'-thioadenosine (hydrolase route): step 1/2. Catalyzes the irreversible cleavage of the glycosidic bond in both 5'-methylthioadenosine (MTA) and S-adenosylhomocysteine (SAH/AdoHcy) to adenine and the corresponding thioribose, 5'-methylthioribose and S-ribosylhomocysteine, respectively. Also cleaves 5'-deoxyadenosine, a toxic by-product of radical S-adenosylmethionine (SAM) enzymes, into 5-deoxyribose and adenine. This is 5'-methylthioadenosine/S-adenosylhomocysteine nucleosidase from Aeromonas salmonicida (strain A449).